The following is a 540-amino-acid chain: Keratin, type II cytoskeletal 73 (540 aa).

Residues 1–131 (MSRQFTYKSG…DPEIQKVCAQ (131 aa)) form a head region. Residues 132 to 167 (EREQIKALNNKFASFIDKVRFLEQQNQVLGTKWELL) are coil 1A. Positions 132-445 (EREQIKALNN…KLLEGEECRM (314 aa)) constitute an IF rod domain. Residues 168-186 (QQQDLDNCKNNLEPILEGY) form a linker 1 region. A coil 1B region spans residues 187 to 278 (ISNLRKQLEM…CLYEGEIAQM (92 aa)). Positions 279-302 (QSHISDTSVILSMDNNRNLDLNSI) are linker 12. Residues 303-441 (IAEVRAQYED…ATYRKLLEGE (139 aa)) form a coil 2 region. A tail region spans residues 442-540 (ECRMSGEYTN…LSSPTKKTPR (99 aa)). Residues 509 to 540 (GEAKTRLGSTSEIKDLLGKTPALSSPTKKTPR) form a disordered region. Polar residues predominate over residues 530–540 (ALSSPTKKTPR).

Belongs to the intermediate filament family. As to quaternary structure, heterotetramer of two type I and two type II keratins.

Its function is as follows. Has a role in hair formation. Specific component of keratin intermediate filaments in the inner root sheath (IRS) of the hair follicle. The polypeptide is Keratin, type II cytoskeletal 73 (KRT73) (Bos taurus (Bovine)).